Here is a 1024-residue protein sequence, read N- to C-terminus: SAC3 family protein 1 (1024 aa).

The tract at residues Met-1–Ser-62 is disordered. Basic residues predominate over residues Arg-11–Ser-21. Positions Lys-22–Ser-38 are enriched in basic and acidic residues. The span at Val-39–Ala-52 shows a compositional bias: acidic residues. The region spanning Glu-243–Lys-433 is the PCI domain. Ser-841 carries the post-translational modification Phosphoserine. The stretch at Ala-945–Thr-1022 forms a coiled coil.

It belongs to the SAC3 family.

Its subcellular location is the cytoplasm. The protein localises to the nucleus envelope. This chain is SAC3 family protein 1, found in Schizosaccharomyces pombe (strain 972 / ATCC 24843) (Fission yeast).